Reading from the N-terminus, the 91-residue chain is MTSQWKCPAKDQSLRNIQRNRRRLGDSGLPATVVRCSKSGATRRNPAVNDASQCSSIVSTVRIGGKDGRHQPKLQSRVLIFELEDKSLSTE.

The protein localises to the nucleus. Functionally, transcription factor; part of the gene cluster 27 that mediates the biosynthesis of asparasone A, a sclerotium-specific anthraquinone pigment important for sclerotial survival. Controls the expression of the non-reducing polyketide synthase (NRPKS) pks27. The polypeptide is Transcription factor znf27 (Aspergillus flavus (strain ATCC 200026 / FGSC A1120 / IAM 13836 / NRRL 3357 / JCM 12722 / SRRC 167)).